A 326-amino-acid polypeptide reads, in one-letter code: Tetraacyldisaccharide 4'-kinase (326 aa).

54-61 (SVGGTGKT) contacts ATP.

Belongs to the LpxK family.

It catalyses the reaction a lipid A disaccharide + ATP = a lipid IVA + ADP + H(+). Its pathway is glycolipid biosynthesis; lipid IV(A) biosynthesis; lipid IV(A) from (3R)-3-hydroxytetradecanoyl-[acyl-carrier-protein] and UDP-N-acetyl-alpha-D-glucosamine: step 6/6. Transfers the gamma-phosphate of ATP to the 4'-position of a tetraacyldisaccharide 1-phosphate intermediate (termed DS-1-P) to form tetraacyldisaccharide 1,4'-bis-phosphate (lipid IVA). The protein is Tetraacyldisaccharide 4'-kinase of Rickettsia canadensis (strain McKiel).